A 257-amino-acid chain; its full sequence is NAD-capped RNA hydrolase NudC (257 aa).

Arg-69 provides a ligand contact to substrate. 2 residues coordinate Zn(2+): Cys-98 and Cys-101. Glu-111 is a binding site for substrate. Zn(2+) is bound by residues Cys-116 and Cys-119. Substrate is bound at residue Tyr-124. Residues 125–248 form the Nudix hydrolase domain; the sequence is PQIAPCIIVA…TVARRLIEDT (124 aa). Ala-158, Glu-174, and Glu-178 together coordinate a divalent metal cation. Residues 159–180 carry the Nudix box motif; the sequence is GFVEVGETLEQAVAREVMEESG. 192–199 provides a ligand contact to substrate; that stretch reads QPWPFPQS. Residue Glu-219 participates in a divalent metal cation binding. Residue Ala-241 participates in substrate binding.

It belongs to the Nudix hydrolase family. NudC subfamily. As to quaternary structure, homodimer. Mg(2+) is required as a cofactor. It depends on Mn(2+) as a cofactor. Zn(2+) serves as cofactor.

The enzyme catalyses a 5'-end NAD(+)-phospho-ribonucleoside in mRNA + H2O = a 5'-end phospho-adenosine-phospho-ribonucleoside in mRNA + beta-nicotinamide D-ribonucleotide + 2 H(+). It carries out the reaction NAD(+) + H2O = beta-nicotinamide D-ribonucleotide + AMP + 2 H(+). The catalysed reaction is NADH + H2O = reduced beta-nicotinamide D-ribonucleotide + AMP + 2 H(+). In terms of biological role, mRNA decapping enzyme that specifically removes the nicotinamide adenine dinucleotide (NAD) cap from a subset of mRNAs by hydrolyzing the diphosphate linkage to produce nicotinamide mononucleotide (NMN) and 5' monophosphate mRNA. The NAD-cap is present at the 5'-end of some mRNAs and stabilizes RNA against 5'-processing. Has preference for mRNAs with a 5'-end purine. Catalyzes the hydrolysis of a broad range of dinucleotide pyrophosphates. The protein is NAD-capped RNA hydrolase NudC of Salmonella schwarzengrund (strain CVM19633).